We begin with the raw amino-acid sequence, 481 residues long: Aspartyl/glutamyl-tRNA(Asn/Gln) amidotransferase subunit B (481 aa).

The protein belongs to the GatB/GatE family. GatB subfamily. As to quaternary structure, heterotrimer of A, B and C subunits.

The enzyme catalyses L-glutamyl-tRNA(Gln) + L-glutamine + ATP + H2O = L-glutaminyl-tRNA(Gln) + L-glutamate + ADP + phosphate + H(+). It catalyses the reaction L-aspartyl-tRNA(Asn) + L-glutamine + ATP + H2O = L-asparaginyl-tRNA(Asn) + L-glutamate + ADP + phosphate + 2 H(+). Allows the formation of correctly charged Asn-tRNA(Asn) or Gln-tRNA(Gln) through the transamidation of misacylated Asp-tRNA(Asn) or Glu-tRNA(Gln) in organisms which lack either or both of asparaginyl-tRNA or glutaminyl-tRNA synthetases. The reaction takes place in the presence of glutamine and ATP through an activated phospho-Asp-tRNA(Asn) or phospho-Glu-tRNA(Gln). The protein is Aspartyl/glutamyl-tRNA(Asn/Gln) amidotransferase subunit B of Pseudomonas entomophila (strain L48).